Consider the following 427-residue polypeptide: 4-hydroxy-3-methylbut-2-en-1-yl diphosphate synthase (flavodoxin) (427 aa).

The tract at residues Met-1–Thr-21 is disordered. Residues Cys-310, Cys-313, Cys-356, and Glu-363 each coordinate [4Fe-4S] cluster.

It belongs to the IspG family. The cofactor is [4Fe-4S] cluster.

The catalysed reaction is (2E)-4-hydroxy-3-methylbut-2-enyl diphosphate + oxidized [flavodoxin] + H2O + 2 H(+) = 2-C-methyl-D-erythritol 2,4-cyclic diphosphate + reduced [flavodoxin]. It functions in the pathway isoprenoid biosynthesis; isopentenyl diphosphate biosynthesis via DXP pathway; isopentenyl diphosphate from 1-deoxy-D-xylulose 5-phosphate: step 5/6. Functionally, converts 2C-methyl-D-erythritol 2,4-cyclodiphosphate (ME-2,4cPP) into 1-hydroxy-2-methyl-2-(E)-butenyl 4-diphosphate. This chain is 4-hydroxy-3-methylbut-2-en-1-yl diphosphate synthase (flavodoxin), found in Bradyrhizobium diazoefficiens (strain JCM 10833 / BCRC 13528 / IAM 13628 / NBRC 14792 / USDA 110).